The following is a 450-amino-acid chain: SAGA complex/transcription factor TFIID complex subunit Taf12 (450 aa).

Polar residues-rich tracts occupy residues 1-10 (MNGQHSSPGT), 19-29 (PVNQAQFSQQR), and 190-212 (QNRQ…NAST). Disordered stretches follow at residues 1–29 (MNGQ…SQQR) and 190–281 (QNRQ…VEKS). A compositionally biased stretch (low complexity) spans 217–236 (STASTPQLQQTQAQANAPQQ). 2 stretches are compositionally biased toward polar residues: residues 237–246 (RINPETSSVP) and 255–281 (ANVS…VEKS). Residue Ser-297 is modified to Phosphoserine. Positions 338 to 413 (NGNRLLSKRK…HLERNWNIRL (76 aa)) constitute a Histone-fold domain. The segment at 426 to 450 (RKTGPTPSYQQKQNAIGTAKSLNKD) is disordered. Residues 430–441 (PTPSYQQKQNAI) show a composition bias toward polar residues.

It belongs to the TAF12 family. In terms of assembly, component of the 1.8 MDa SAGA (Spt-Ada-Gcn5 acetyltransferase) complex, which is composed of 19 subunits tra1, spt7, taf5, ngg1/ada3, sgf73, spt20, spt8, taf12, taf6, hfi1/ada1, ubp8, gcn5, ada2, spt3, sgf29, taf10, taf9, sgf11 and sus1. The SAGA complex is composed of 4 modules, namely the HAT (histone acetyltransferase) module (gcn5, ada2, ngg1/ada3 and sgf29), the DUB (deubiquitinating) module (ubp8, sgf11, sgf73 and sus1), the core or TAF (TBP-associated factor) module (taf5, taf6, taf9, taf10 and taf12), and the Tra1 or SPT (Suppressor of Ty) module (tra1, hfi1/ada1, spt3, spt7, spt8 and spt20). The Tra1/SPT module binds activators, the core module recruits TBP (TATA-binding protein), the HAT module contains the histone H3 acetyltransferase gcn5, and the DUB module comprises the histone H2B deubiquitinase ubp8. Component of the 1.2 MDa TFIID complex, which is composed of TATA-binding protein (TBP) and the 14 TBP-associated factors (TAFs). It comprises 1 copy of each taf1, taf2, taf3, taf7, taf8, taf11, taf13, 2 copies of each taf4, taf5, taf6, taf9, taf10, taf12, and 3 copies of taf14. In TFIID, taf12 heterodimerizes with taf4, forming ultimately an octamer consisting of a taf6-taf9 heterotetramer core flanked by taf4-taf12 dimers on either side, similar to the histone H2A-H2B-H3-H4 octamer.

It localises to the nucleus. Functions as a component of both the DNA-binding general transcription initiation factor complex TFIID and the transcription coactivator SAGA complex. Binding of TFIID to a promoter (with or without TATA element) is the initial step in pre-initiation complex (PIC) formation. TFIID plays a key role in the regulation of gene expression by RNA polymerase II through different activities such as transcription activator interaction, core promoter recognition and selectivity, TFIIA and TFIIB interaction, chromatin modification (histone acetylation by TAF1), facilitation of DNA opening and initiation of transcription. SAGA acts as a general cofactor required for essentially all RNA polymerase II transcription. At the promoters, SAGA is required for transcription pre-initiation complex (PIC) recruitment. It influences RNA polymerase II transcriptional activity through different activities such as TBP interaction (via core/TAF module) and promoter selectivity, interaction with transcription activators (via Tra1/SPT module), and chromatin modification through histone acetylation (via HAT module) and deubiquitination (via DUB module). SAGA preferentially acetylates histones H3 (to form H3K9ac, H3K14ac, H3K18ac and H3K23ac) and H2B and deubiquitinates histone H2B. SAGA interacts with DNA via upstream activating sequences (UASs). This chain is SAGA complex/transcription factor TFIID complex subunit Taf12, found in Schizosaccharomyces pombe (strain 972 / ATCC 24843) (Fission yeast).